Reading from the N-terminus, the 478-residue chain is Solute carrier family 49 member 4 (478 aa).

The tract at residues 1-27 (MGSGWSSEEEERQPLLGPGLGPAPGAA) is disordered. At 1–51 (MGSGWSSEEEERQPLLGPGLGPAPGAARRGREATAVLPAAGPNPGRVYGRR) the chain is on the cytoplasmic side. The Di-leucine motif; mediates lysosomal localization motif lies at 15 to 16 (LL). Residues 52 to 72 (WLVLLLFSLLAFAQGLVWNTW) traverse the membrane as a helical segment. The Lumenal segment spans residues 73–89 (GPIQNSARQAYGFSGWD). A helical membrane pass occupies residues 90 to 110 (IALLVLWGPIGFLPCFAFMWL). Residues 111–117 (LDKRGLR) lie on the Cytoplasmic side of the membrane. A helical transmembrane segment spans residues 118-138 (VTVLLTSFLMVLGTGLRCIPV). Topologically, residues 139–152 (SDLALKKRLIHGGQ) are lumenal. A helical membrane pass occupies residues 153 to 173 (ILNGLAGPTVMNAAPFLSTTW). Over 174-184 (FSADERATATA) the chain is Cytoplasmic. Residues 185–205 (IASMLSYLGGACAFLVGPLVV) form a helical membrane-spanning segment. Over 206–229 (PAPNGTAPLLAAESSRAHIKDRIE) the chain is Lumenal. N-linked (GlcNAc...) asparagine glycosylation occurs at N209. Residues 230–250 (TVLYAEFGVVCLIFSATLAYF) traverse the membrane as a helical segment. At 251 to 281 (PPRPPLPPSVAAASQRLSYRRSFCRLLSNLR) the chain is on the cytoplasmic side. The helical transmembrane segment at 282 to 302 (FLMIALAYAIPLGVFAGWSGV) threads the bilayer. Residues 303-314 (LDLILTPVHVSQ) lie on the Lumenal side of the membrane. Residues 315-335 (VDAGWIGFWSIVGGCVVGIAM) form a helical membrane-spanning segment. The Cytoplasmic segment spans residues 336 to 347 (ARFADFIRGMLK). Residues 348–368 (LILLLLFSGATLSSTWFTLTC) traverse the membrane as a helical segment. Residues 369–384 (LNSITHLPLTTVTLYA) lie on the Lumenal side of the membrane. Residues 385-405 (SCILLGVFLNSSVPIFFELFV) traverse the membrane as a helical segment. At 406 to 414 (ETVYPVPEG) the chain is on the cytoplasmic side. The helical transmembrane segment at 415 to 435 (ITCGVVTFLSNMFMGVLLFFV) threads the bilayer. The Lumenal portion of the chain corresponds to 436–442 (TFYHTEL). The helical transmembrane segment at 443-463 (SWFNWCLPGSCLLSLLLILCF) threads the bilayer. Residues 464–478 (RESYDRLYLDVVVSV) lie on the Cytoplasmic side of the membrane.

This sequence belongs to the major facilitator superfamily. In terms of processing, cleaved in lysosomes by cathepsin L between Leu-214 and Ala-261, generating a N-glycosylated N-terminal and a non-glycosylated C-terminal fragment.

The protein localises to the lysosome membrane. It carries out the reaction pyridoxine(out) + n H(+)(out) = pyridoxine(in) + n H(+)(in). Its function is as follows. Mediates H(+)-dependent pyridoxine transport. The polypeptide is Solute carrier family 49 member 4 (Slc49a4) (Mus musculus (Mouse)).